The sequence spans 297 residues: Tryptophan 2,3-dioxygenase (297 aa).

Residues 51–55 (FIIQH), tyrosine 113, and arginine 117 contribute to the substrate site. Residue histidine 240 coordinates heme. Threonine 254 provides a ligand contact to substrate.

Belongs to the tryptophan 2,3-dioxygenase family. In terms of assembly, homotetramer. Requires heme as cofactor.

It catalyses the reaction L-tryptophan + O2 = N-formyl-L-kynurenine. The protein operates within amino-acid degradation; L-tryptophan degradation via kynurenine pathway; L-kynurenine from L-tryptophan: step 1/2. Its function is as follows. Heme-dependent dioxygenase that catalyzes the oxidative cleavage of the L-tryptophan (L-Trp) pyrrole ring and converts L-tryptophan to N-formyl-L-kynurenine. Catalyzes the oxidative cleavage of the indole moiety. The chain is Tryptophan 2,3-dioxygenase from Xanthomonas oryzae pv. oryzae (strain MAFF 311018).